The primary structure comprises 655 residues: A-type voltage-gated potassium channel KCND3 (655 aa).

Over 1 to 182 (MAAGVAAWLP…FENPHTSTLA (182 aa)) the chain is Cytoplasmic. Interaction with KCNIP1 stretches follow at residues 6 to 21 (AAWL…GWMP) and 70 to 78 (EKEFFFNED). Residues H104, C110, C131, and C132 each contribute to the Zn(2+) site. S153 carries the post-translational modification Phosphoserine. A helical membrane pass occupies residues 183 to 204 (LVFYYVTGFFIAVSVITNVVET). Residues 205–223 (VPCGTVPGSKELPCGERYS) are Extracellular-facing. A helical membrane pass occupies residues 224–246 (VAFFCLDTACVMIFTVEYLLRLF). The Cytoplasmic segment spans residues 247–253 (AAPSRYR). Residues 254–277 (FIRSVMSIIDVVAIMPYYIGLVMT) traverse the membrane as a helical segment. At 278 to 283 (NNEDVS) the chain is on the extracellular side. The chain crosses the membrane as a helical; Voltage-sensor span at residues 284 to 306 (GAFVTLRVFRVFRIFKFSRHSQG). Over 307-318 (LRILGYTLKSCA) the chain is Cytoplasmic. The helical transmembrane segment at 319–343 (SELGFLLFSLTMAIIIFATVMFYAE) threads the bilayer. Residues 344–352 (KGSSASKFT) lie on the Extracellular side of the membrane. Positions 353-366 (SIPASFWYTIVTMT) form an intramembrane region, helical. Positions 367, 368, 369, and 370 each coordinate K(+). Residues 367–372 (TLGYGD) carry the Selectivity filter motif. An intramembrane segment occupies 367–374 (TLGYGDMV). A helical transmembrane segment spans residues 378 to 400 (IAGKIFGSICSLSGVLVIALPVP). The Cytoplasmic portion of the chain corresponds to 401–655 (VIVSNFSRIY…TSNVVKVSVL (255 aa)). T459 carries the post-translational modification Phosphothreonine. Residues 470–487 (SLIESQHHHLLHCLEKTT) are interaction with KCNIP1 and KCNIP2. Positions 474-489 (SQHHHLLHCLEKTTGL) are mediates dendritic targeting. The disordered stretch occupies residues 523–565 (SSMQNYPSTRSPSLSSHSGLTTTCCSRRSKKTTHLPNSNLPAT). Over residues 529–548 (PSTRSPSLSSHSGLTTTCCS) the composition is skewed to low complexity. S569 is subject to Phosphoserine; by CaMK2D. Residue S585 is modified to Phosphoserine. The tract at residues 616-647 (SIPTPPALTPEGESRPPPASPGPNTNIPSITS) is disordered. Polar residues predominate over residues 637–647 (GPNTNIPSITS).

It belongs to the potassium channel family. D (Shal) (TC 1.A.1.2) subfamily. Kv4.3/KCND3 sub-subfamily. Homotetramer. Heterotetramer with KCND2. Associates with the regulatory subunits KCNIP3 and KCNIP4. Interacts with KCNE1, KCNE2, SCN1B and KCNAB1 and DLG1. Component of heteromultimeric potassium channels. Identified in potassium channel complexes containing KCND1, KCND2, KCND3, KCNIP1, KCNIP2, KCNIP3, KCNIP4, DPP6 and DPP10. Interacts with KCNIP1; each KCNIP1 monomer interacts with two adjacent KCND3 subunits, through both the N-terminal inactivation ball of a KCND3 subunit and a C-terminal helix from the adjacent KCND3 subunit, clamping them together; this interaction stabilizes the tetrameric form and modulates the channel gating kinetics namely channel activation and inactivation kinetics and rate of recovery from inactivation. Interacts with DPP6; this interaction modulates the channel gating kinetics namely channel activation and inactivation kinetics and rate of recovery from inactivation. Interacts with KCNIP2; each KCNIP2 monomer interacts with two adjacent KCND3 subunits, through both the N-terminal inactivation ball of a KCND3 subunit and a C-terminal helix from the adjacent KCND3 subunit, clamping them together; this interaction modulates the channel gating kinetics. In terms of processing, regulated through phosphorylation at Ser-569 by CaMK2D. Highly expressed in brain, in particular in the retrosplenial cortex, medial habenula, anterior thalamus, hippocampus, cerebellum and lateral geniculate and superior colliculus. Highly expressed in heart atrium (at protein level) and throughout the ventricle wall, in lung and vas deferens.

It localises to the cell membrane. Its subcellular location is the sarcolemma. The protein localises to the cell projection. It is found in the dendrite. It catalyses the reaction K(+)(in) = K(+)(out). In terms of biological role, pore-forming (alpha) subunit of voltage-gated A-type potassium channels that mediates transmembrane potassium transport in excitable membranes, in brain and heart. In cardiomyocytes, may generate the transient outward potassium current I(To). In neurons, may conduct the transient subthreshold somatodendritic A-type potassium current (ISA). Kinetics properties are characterized by fast activation at subthreshold membrane potentials, rapid inactivation, and quick recovery from inactivation. Channel properties are modulated by interactions with regulatory subunits. Interaction with the regulatory subunits KCNIP1 or KCNIP2 modulates the channel gating kinetics namely channel activation and inactivation kinetics and rate of recovery from inactivation. Likewise, interaction with DPP6 modulates the channel gating kinetics namely channel activation and inactivation kinetics. The polypeptide is A-type voltage-gated potassium channel KCND3 (Rattus norvegicus (Rat)).